A 176-amino-acid chain; its full sequence is Ferritin, liver middle subunit (176 aa).

Residues 7-156 (QNYHRDCEAA…DFITNLSRMD (150 aa)) enclose the Ferritin-like diiron domain. Residues Glu24, Glu59, His62, Glu104, and Gln138 each coordinate Fe cation.

This sequence belongs to the ferritin family. In liver, forms a heteromer consisting of middle and heavy subunits. The functional molecule forms a roughly spherical shell with a diameter of 12 nm and contains a central cavity into which the insoluble mineral iron core is deposited. In terms of tissue distribution, liver (at protein level).

The enzyme catalyses 4 Fe(2+) + O2 + 4 H(+) = 4 Fe(3+) + 2 H2O. Its function is as follows. Stores iron in a soluble, non-toxic, readily available form. Important for iron homeostasis. Has ferroxidase activity. Iron is taken up in the ferrous form and deposited as ferric hydroxides after oxidation. The protein is Ferritin, liver middle subunit of Trematomus bernacchii (Emerald rockcod).